The sequence spans 164 residues: MTQWIIWLAIETEAAKPEGGLFDFDATLPVMMVQLLVLMLILNAVFYKPLIKILDERKEYIQSNFNEAEKCLAQAAELTTQYETKITDARQNASKLTNTTRSEIQRFVSEKLEEAQKKADSELASATNKLELQKDEALKSLESEVQTLSTKILEKLLGIQIANT.

Residues 26–46 (ATLPVMMVQLLVLMLILNAVF) form a helical membrane-spanning segment.

The protein belongs to the ATPase B chain family. In terms of assembly, F-type ATPases have 2 components, F(1) - the catalytic core - and F(0) - the membrane proton channel. F(1) has five subunits: alpha(3), beta(3), gamma(1), delta(1), epsilon(1). F(0) has four main subunits: a(1), b(1), b'(1) and c(10-14). The alpha and beta chains form an alternating ring which encloses part of the gamma chain. F(1) is attached to F(0) by a central stalk formed by the gamma and epsilon chains, while a peripheral stalk is formed by the delta, b and b' chains.

It is found in the plastid. The protein resides in the cyanelle thylakoid membrane. Functionally, f(1)F(0) ATP synthase produces ATP from ADP in the presence of a proton or sodium gradient. F-type ATPases consist of two structural domains, F(1) containing the extramembraneous catalytic core and F(0) containing the membrane proton channel, linked together by a central stalk and a peripheral stalk. During catalysis, ATP synthesis in the catalytic domain of F(1) is coupled via a rotary mechanism of the central stalk subunits to proton translocation. In terms of biological role, component of the F(0) channel, it forms part of the peripheral stalk, linking F(1) to F(0). The b'-subunit is a diverged and duplicated form of b found in plants and photosynthetic bacteria. This is ATP synthase B' chain, cyanelle from Cyanophora paradoxa.